The chain runs to 287 residues: Fructose-bisphosphate aldolase (287 aa).

Ser50 is a binding site for D-glyceraldehyde 3-phosphate. Asp85 serves as the catalytic Proton donor. Residues His86, Asp107, Glu137, and His181 each contribute to the Zn(2+) site. Gly182 provides a ligand contact to dihydroxyacetone phosphate. Residue His209 participates in Zn(2+) binding. Dihydroxyacetone phosphate is bound by residues 210–212 (GGT) and 231–234 (NVNT). Phosphothreonine occurs at positions 212 and 234.

Belongs to the class II fructose-bisphosphate aldolase family. Requires Zn(2+) as cofactor.

The enzyme catalyses beta-D-fructose 1,6-bisphosphate = D-glyceraldehyde 3-phosphate + dihydroxyacetone phosphate. The protein operates within carbohydrate degradation; glycolysis; D-glyceraldehyde 3-phosphate and glycerone phosphate from D-glucose: step 4/4. Catalyzes the aldol condensation of dihydroxyacetone phosphate (DHAP or glycerone-phosphate) with glyceraldehyde 3-phosphate (G3P) to form fructose 1,6-bisphosphate (FBP) in gluconeogenesis and the reverse reaction in glycolysis. The protein is Fructose-bisphosphate aldolase (fba) of Geobacillus stearothermophilus (Bacillus stearothermophilus).